A 499-amino-acid polypeptide reads, in one-letter code: Glycerol kinase (499 aa).

ADP is bound at residue Thr12. Residues Thr12, Thr13, and Ser14 each coordinate ATP. Residue Thr12 coordinates sn-glycerol 3-phosphate. ADP is bound at residue Arg16. 4 residues coordinate sn-glycerol 3-phosphate: Arg82, Glu83, Tyr134, and Asp240. Residues Arg82, Glu83, Tyr134, Asp240, and Gln241 each coordinate glycerol. Residues Thr262 and Gly306 each contribute to the ADP site. The ATP site is built by Thr262, Gly306, Gln310, and Gly412. The ADP site is built by Gly412 and Asn416.

Belongs to the FGGY kinase family.

It catalyses the reaction glycerol + ATP = sn-glycerol 3-phosphate + ADP + H(+). It functions in the pathway polyol metabolism; glycerol degradation via glycerol kinase pathway; sn-glycerol 3-phosphate from glycerol: step 1/1. With respect to regulation, inhibited by fructose 1,6-bisphosphate (FBP). In terms of biological role, key enzyme in the regulation of glycerol uptake and metabolism. Catalyzes the phosphorylation of glycerol to yield sn-glycerol 3-phosphate. The sequence is that of Glycerol kinase from Nocardia farcinica (strain IFM 10152).